Here is a 181-residue protein sequence, read N- to C-terminus: Ubiquitin-like protein 4B (181 aa).

The Ubiquitin-like domain maps to Met-1–Lys-76. Residues Pro-139–Lys-181 form a disordered region. Composition is skewed to basic and acidic residues over residues Arg-151 to Arg-161 and Ala-168 to Lys-181.

It is found in the cytoplasm. The sequence is that of Ubiquitin-like protein 4B (UBL4B) from Monodelphis domestica (Gray short-tailed opossum).